The primary structure comprises 569 residues: uncharacterized protein (569 aa).

Residues 1–21 form the signal peptide; it reads MLCVMMLLFSAIASFPVSAQA. The Extracellular segment spans residues 22–530; it reads KDQDAGILII…DHHRQTPLEK (509 aa). A helical membrane pass occupies residues 531–551; sequence ALWILSAVVLLFVIMFVSYTF. At 552-569 the chain is on the cytoplasmic side; that stretch reads YLRATLKKRIFKERRSLG.

It is found in the cell membrane. This is an uncharacterized protein from Bacillus subtilis (strain 168).